We begin with the raw amino-acid sequence, 873 residues long: Mitogen-activated protein kinase kinase kinase kinase 3 (873 aa).

At Met1 the chain carries N-acetylmethionine. Residues 16–273 (FELIQRIGSG…AEKLLQHPFV (258 aa)) form the Protein kinase domain. ATP is bound by residues 22-30 (IGSGTYGDV) and Lys45. Catalysis depends on Asp136, which acts as the Proton acceptor. Phosphoserine occurs at positions 329 and 377. Residues 389 to 518 (AHLEDDEGDD…KPISNGLPPT (130 aa)) are disordered. Positions 452–466 (HVPPRPPPPRLPPQK) are enriched in pro residues. Residues 487–499 (VHQQQSEQRGTNL) are compositionally biased toward polar residues. Positions 535 to 846 (PLKIHCATSW…IFRLLGSDRV (312 aa)) constitute a CNH domain.

This sequence belongs to the protein kinase superfamily. STE Ser/Thr protein kinase family. STE20 subfamily. As to quaternary structure, interacts with SH3GL2. Interaction appears to regulate MAP4K3-mediated JNK activation. It depends on Mg(2+) as a cofactor.

It carries out the reaction L-seryl-[protein] + ATP = O-phospho-L-seryl-[protein] + ADP + H(+). It catalyses the reaction L-threonyl-[protein] + ATP = O-phospho-L-threonyl-[protein] + ADP + H(+). Functionally, serine/threonine kinase that plays a role in the response to environmental stress. Appears to act upstream of the JUN N-terminal pathway. Activator of the Hippo signaling pathway which plays a pivotal role in organ size control and tumor suppression by restricting proliferation and promoting apoptosis. MAP4Ks act in parallel to and are partially redundant with STK3/MST2 and STK4/MST2 in the phosphorylation and activation of LATS1/2, and establish MAP4Ks as components of the expanded Hippo pathway. This Rattus norvegicus (Rat) protein is Mitogen-activated protein kinase kinase kinase kinase 3 (Map4k3).